The following is a 470-amino-acid chain: ESX-4 secretion system ATPase EccB4 (470 aa).

Residues 44 to 64 traverse the membrane as a helical segment; sequence LALGCVLAIVAAMGCAFVALL.

Belongs to the EccB family. Part of the ESX-4 / type VII secretion system (T7SS), which is composed of cytosolic and membrane components.

It localises to the cell membrane. Its function is as follows. An ATPase. The polypeptide is ESX-4 secretion system ATPase EccB4 (eccB4) (Mycobacterium tuberculosis (strain CDC 1551 / Oshkosh)).